The chain runs to 153 residues: Transcriptional repressor NrdR (153 aa).

The segment at 3-34 (CPFCHNQDTRVIDSRAAEEGTAIRRRRSCPAC) is a zinc-finger region. In terms of domain architecture, ATP-cone spans 46–136 (LMVTKRSGAT…VYRSFESLED (91 aa)).

The protein belongs to the NrdR family. Requires Zn(2+) as cofactor.

Negatively regulates transcription of bacterial ribonucleotide reductase nrd genes and operons by binding to NrdR-boxes. The protein is Transcriptional repressor NrdR of Thermobifida fusca (strain YX).